The primary structure comprises 300 residues: GTPase Era (300 aa).

Residues 8-176 (RCGYVAIVGR…EGLIAKHLPE (169 aa)) form the Era-type G domain. The tract at residues 16–23 (GRPNVGKS) is G1. Position 16-23 (16-23 (GRPNVGKS)) interacts with GTP. Positions 42–46 (QTTRH) are G2. The interval 63–66 (DTPG) is G3. Residues 63-67 (DTPGM) and 125-128 (NKTD) contribute to the GTP site. The segment at 125–128 (NKTD) is G4. Residues 155-157 (VSA) are G5. Positions 199–283 (VREKIMRQLG…MLNLWVKVKG (85 aa)) constitute a KH type-2 domain.

Belongs to the TRAFAC class TrmE-Era-EngA-EngB-Septin-like GTPase superfamily. Era GTPase family. In terms of assembly, monomer.

The protein localises to the cytoplasm. It localises to the cell inner membrane. Its function is as follows. An essential GTPase that binds both GDP and GTP, with rapid nucleotide exchange. Plays a role in 16S rRNA processing and 30S ribosomal subunit biogenesis and possibly also in cell cycle regulation and energy metabolism. The sequence is that of GTPase Era from Pseudomonas fluorescens (strain ATCC BAA-477 / NRRL B-23932 / Pf-5).